A 101-amino-acid chain; its full sequence is YcgL domain-containing protein ABBFA_001807 (101 aa).

One can recognise a YcgL domain in the interval 1-92; it reads MHCDIYRSSK…PPEGLINPNA (92 aa).

This chain is YcgL domain-containing protein ABBFA_001807, found in Acinetobacter baumannii (strain AB307-0294).